Here is a 346-residue protein sequence, read N- to C-terminus: Homeobox protein ceh-22 (346 aa).

Disordered regions lie at residues 1–68 and 135–190; these read MFNV…QSAL and LPDQ…RKKR. Low complexity predominate over residues 9-24; sequence AATPSIASVSSVASPS. Residues 25 to 44 show a composition bias toward polar residues; that stretch reads EQHGLSTSVGVGVNDTTSRT. Residues 49 to 67 are compositionally biased toward low complexity; that stretch reads AASSASSASAAPQQQSQSA. Residues 147-156 show a composition bias toward polar residues; sequence LDNSNTSNGN. Over residues 166–182 the composition is skewed to acidic residues; that stretch reads EDEDEILEDEENDEEDD. The homeobox DNA-binding region spans 189–248; the sequence is KRKRRVLFTKAQTYELERRFRSQKYLSAPEREALAMQIRLTPTQVKIWFQNHRYKTKKSH.

It belongs to the NK-2 homeobox family.

The protein resides in the nucleus. Involved in combinatorial activation of gene expression in pharyngeal muscle. Specifically binds a site necessary for activity of the B subelement of myo-2 enhancer. Its function is as follows. Regulates distal tip cell fate. In Caenorhabditis elegans, this protein is Homeobox protein ceh-22 (ceh-22).